Consider the following 257-residue polypeptide: Snake venom serine protease Haly-2 (257 aa).

Positions 1–18 (MVLIRVLANLLILQLSYA) are cleaved as a signal peptide. Positions 19 to 24 (QKSSEL) are excised as a propeptide. Residues 25 to 248 (IIGGDECNIN…HLEWIRSIIA (224 aa)) enclose the Peptidase S1 domain. Cystine bridges form between cysteine 31–cysteine 162, cysteine 49–cysteine 65, cysteine 97–cysteine 255, cysteine 141–cysteine 209, cysteine 173–cysteine 188, and cysteine 199–cysteine 224. Histidine 64 (charge relay system) is an active-site residue. N-linked (GlcNAc...) asparagine glycosylation is present at asparagine 100. The active-site Charge relay system is the aspartate 109. The active-site Charge relay system is the serine 203.

Belongs to the peptidase S1 family. Snake venom subfamily. Monomer. As to expression, expressed by the venom gland.

The protein resides in the secreted. Its function is as follows. Snake venom serine protease that may act in the hemostasis system of the prey. The protein is Snake venom serine protease Haly-2 of Gloydius brevicauda (Korean slamosa snake).